Here is an 88-residue protein sequence, read N- to C-terminus: Small ribosomal subunit protein bS16 (88 aa).

This sequence belongs to the bacterial ribosomal protein bS16 family.

This is Small ribosomal subunit protein bS16 from Symbiobacterium thermophilum (strain DSM 24528 / JCM 14929 / IAM 14863 / T).